Consider the following 360-residue polypeptide: Protein Wnt-2 (360 aa).

A signal peptide spans 1 to 25; sequence MNACLVGIWLWLPLLFTWLSPEVSS. 11 disulfide bridges follow: C76/C87, C127/C135, C137/C157, C206/C220, C208/C215, C278/C309, C294/C304, C308/C348, C324/C339, C326/C336, and C331/C332. A lipid anchor (O-palmitoleoyl serine; by PORCN) is attached at S212. N-linked (GlcNAc...) asparagine glycosylation occurs at N295.

Belongs to the Wnt family. Palmitoleoylation is required for efficient binding to frizzled receptors. Depalmitoleoylation leads to Wnt signaling pathway inhibition.

Its subcellular location is the secreted. The protein resides in the extracellular space. It is found in the extracellular matrix. In terms of biological role, ligand for members of the frizzled family of seven transmembrane receptors. Probable developmental protein. May be a signaling molecule which affects the development of discrete regions of tissues. Is likely to signal over only few cell diameters. The polypeptide is Protein Wnt-2 (WNT2) (Muntiacus muntjak (Barking deer)).